The primary structure comprises 141 residues: Nucleoside diphosphate kinase (141 aa).

ATP-binding residues include Lys11, Phe59, Arg87, Thr93, Arg104, and Asn114. His117 acts as the Pros-phosphohistidine intermediate in catalysis.

The protein belongs to the NDK family. In terms of assembly, homotetramer. Requires Mg(2+) as cofactor.

It is found in the cytoplasm. The enzyme catalyses a 2'-deoxyribonucleoside 5'-diphosphate + ATP = a 2'-deoxyribonucleoside 5'-triphosphate + ADP. The catalysed reaction is a ribonucleoside 5'-diphosphate + ATP = a ribonucleoside 5'-triphosphate + ADP. Functionally, major role in the synthesis of nucleoside triphosphates other than ATP. The ATP gamma phosphate is transferred to the NDP beta phosphate via a ping-pong mechanism, using a phosphorylated active-site intermediate. The sequence is that of Nucleoside diphosphate kinase from Neisseria gonorrhoeae (strain NCCP11945).